Here is a 180-residue protein sequence, read N- to C-terminus: Large ribosomal subunit protein uL5c (180 aa).

The protein belongs to the universal ribosomal protein uL5 family. As to quaternary structure, part of the 50S ribosomal subunit; contacts the 5S rRNA.

It is found in the plastid. Its subcellular location is the chloroplast. Its function is as follows. Binds 5S rRNA, forms part of the central protuberance of the 50S subunit. This chain is Large ribosomal subunit protein uL5c (rpl5), found in Tupiella akineta (Green alga).